Reading from the N-terminus, the 266-residue chain is Apolipoprotein A-I (266 aa).

The first 18 residues, 1-18 (MKAVVLTLAVLFLTGSQA), serve as a signal peptide directing secretion. 2 consecutive repeat copies span residues 67-88 (LKLL…EQIG) and 89-110 (PVTQ…QEMN). Residues 67 to 266 (LKLLDNWDSL…DEATKKLNAQ (200 aa)) are 10 X approximate tandem repeats. M109 bears the Methionine sulfoxide mark. The 3; half-length repeat unit spans residues 111-121 (KDLEEVKKKVQ). 5 consecutive repeat copies span residues 122–143 (PYLD…QKVA), 144–165 (PLGA…EKLS), 166–187 (PLGE…AQLA), 188–209 (PYSE…EGGG), and 210–231 (ATLT…EKAK). Residues 232 to 242 (PALEDLRQGLM) form a 9; half-length repeat. Residues 243 to 266 (PVLESFRASLLAAVDEATKKLNAQ) form repeat 10.

Belongs to the apolipoprotein A1/A4/E family. As to quaternary structure, homodimer. Interacts with APOA1BP and CLU. Component of a sperm activating protein complex (SPAP), consisting of APOA1, an immunoglobulin heavy chain, an immunoglobulin light chain and albumin. Interacts with NDRG1. Interacts with SCGB3A2. Interacts with NAXE and YJEFN3. In terms of processing, glycosylated. Palmitoylated. Post-translationally, phosphorylation sites are present in the extracellular medium.

It is found in the secreted. Its function is as follows. Participates in the reverse transport of cholesterol from tissues to the liver for excretion by promoting cholesterol efflux from tissues and by acting as a cofactor for the lecithin cholesterol acyltransferase (LCAT). As part of the SPAP complex, activates spermatozoa motility. This chain is Apolipoprotein A-I (APOA1), found in Phoca vitulina (Harbor seal).